A 481-amino-acid polypeptide reads, in one-letter code: tRNA:m(4)X modification enzyme TRM13 homolog (481 aa).

Ala-2 bears the N-acetylalanine mark. The segment at 56 to 83 adopts a CHHC U11-48K-type zinc-finger fold; sequence RILCPLDPKHTVYEDQLAKHLKKCNSRE. The Zn(2+) site is built by Cys-59, His-65, His-75, and Cys-79. Positions 113–140 form a coiled coil; it reads SLSEEQLEKLIKKLRKASEGLNSTLKDH. Residues 381-408 form a disordered region; sequence ETSNSTTKRQDNQNDDSEEHDDGGYRIT.

This sequence belongs to the methyltransferase TRM13 family.

The catalysed reaction is cytidine(4) in tRNA(Pro) + S-adenosyl-L-methionine = 2'-O-methylcytidine(4) in tRNA(Pro) + S-adenosyl-L-homocysteine + H(+). The enzyme catalyses cytidine(4) in tRNA(Gly)(GCC) + S-adenosyl-L-methionine = 2'-O-methylcytidine(4) in tRNA(Gly)(GCC) + S-adenosyl-L-homocysteine + H(+). It catalyses the reaction adenosine(4) in tRNA(His) + S-adenosyl-L-methionine = 2'-O-methyladenosine(4) in tRNA(His) + S-adenosyl-L-homocysteine + H(+). TRNA methylase which 2'-O-methylates cytidine(4) in tRNA(Pro) and tRNA(Gly)(GCC), and adenosine(4) in tRNA(His). The chain is tRNA:m(4)X modification enzyme TRM13 homolog (TRMT13) from Homo sapiens (Human).